A 38-amino-acid chain; its full sequence is Spheniscin-2 (38 aa).

Cystine bridges form between Cys5–Cys33, Cys12–Cys27, and Cys17–Cys34.

In terms of assembly, monomer. Secreted into the stomach cavity.

It localises to the secreted. In terms of biological role, has antifungal activity and antibacterial activity against Gram-positive and Gram-negative bacteria. Involved in the process of food preservation in the stomach during the incubation fast. May also be present during infection. This is Spheniscin-2 from Aptenodytes patagonicus (King penguin).